The primary structure comprises 1446 residues: E3 ubiquitin-protein ligase listerin (1446 aa).

HEAT repeat units follow at residues 71-108 (QTREKGLKELMELINTENSSIESSYEHFCGLVAQLTTD), 115-153 (MLTMKVISQFLTKLKKSASKGLKKIIPFVLFAKSDVTNG), 324-361 (SLQKGIYPRLLNLIRKKGNHWRVLKHYLLPAVSVLLQK), 363-399 (ENPALITSIITSFTDNLPWQAEASMNAIHCWFCTFSD), 413-450 (EILKDLSPLIVEMSNQSMHFNTAEATECISGLIHWIIE), 630-669 (AENVDFLISLLQSLDSKEDPEERKNLVLKLLSALFDAEDE), 684-721 (GDFEQFFEKLFANMEEEDAERVLEIAARFDKLVGFCDA), 1046-1083 (LRALFVISEFPTSFSNDDDVANQEFIPELSVFKYPAFQ), 1107-1144 (SVARLLMPIMFKLENAAALKSNEDSELPVSTNRRKLSL), 1165-1202 (LLDLTLLPLENTKDSGFSQEHRVAYCDVIDPFFKNALN), and 1251-1289 (FKSMTLLPAAIRLFYKGMPNCFMPMFQETVTKYASRLLI). The RING-type zinc finger occupies 1395–1442 (CTICMMTVHQQTHQLPKIKCKQCKNKFHSNCLYKWFESSNQSTCPLCR).

This sequence belongs to the LTN1 family. In terms of assembly, component of the ribosome quality control complex (RQC), composed of at least the E3 ubiquitin ligase ltn1 and nemf. The complex probably also contains tcf25 as well as vcp/p97 and its ubiquitin-binding cofactors. RQC forms a stable complex with 60S ribosomal subunits.

It localises to the cytoplasm. Its subcellular location is the cytosol. It carries out the reaction S-ubiquitinyl-[E2 ubiquitin-conjugating enzyme]-L-cysteine + [acceptor protein]-L-lysine = [E2 ubiquitin-conjugating enzyme]-L-cysteine + N(6)-ubiquitinyl-[acceptor protein]-L-lysine.. It functions in the pathway protein modification; protein ubiquitination. Its function is as follows. E3 ubiquitin-protein ligase. Component of the ribosome quality control complex (RQC), a ribosome-associated complex that mediates ubiquitination and extraction of incompletely synthesized nascent chains for proteasomal degradation. Ubiquitination leads to vcp/p97 recruitment for extraction and degradation of the incomplete translation product. This is E3 ubiquitin-protein ligase listerin from Caenorhabditis elegans.